Consider the following 190-residue polypeptide: Ubiquinol-cytochrome c reductase iron-sulfur subunit (190 aa).

A helical transmembrane segment spans residues 18 to 39 (FLYYATAGAGTVAAGAAAWTLV). The 94-residue stretch at 95–188 (GQLIDRSAQN…AEFLDDTTIK (94 aa)) folds into the Rieske domain. [2Fe-2S] cluster is bound by residues cysteine 132, histidine 134, cysteine 152, and histidine 155. Residues cysteine 137 and cysteine 154 are joined by a disulfide bond.

It belongs to the Rieske iron-sulfur protein family. As to quaternary structure, the main subunits of complex b-c1 are: cytochrome b, cytochrome c1 and the Rieske protein. The cofactor is [2Fe-2S] cluster.

The protein resides in the cell membrane. The enzyme catalyses a quinol + 2 Fe(III)-[cytochrome c](out) = a quinone + 2 Fe(II)-[cytochrome c](out) + 2 H(+)(out). Functionally, component of the ubiquinol-cytochrome c reductase complex (complex III or cytochrome b-c1 complex), which is a respiratory chain that generates an electrochemical potential coupled to ATP synthesis. The protein is Ubiquinol-cytochrome c reductase iron-sulfur subunit (petA) of Paracoccus denitrificans.